The primary structure comprises 476 residues: Bifunctional protein HldE (476 aa).

The tract at residues methionine 1–serine 319 is ribokinase. Asparagine 195 to glutamate 198 is an ATP binding site. Aspartate 264 is an active-site residue. The interval methionine 345–glutamine 476 is cytidylyltransferase.

It in the N-terminal section; belongs to the carbohydrate kinase PfkB family. The protein in the C-terminal section; belongs to the cytidylyltransferase family. Homodimer.

The enzyme catalyses D-glycero-beta-D-manno-heptose 7-phosphate + ATP = D-glycero-beta-D-manno-heptose 1,7-bisphosphate + ADP + H(+). It catalyses the reaction D-glycero-beta-D-manno-heptose 1-phosphate + ATP + H(+) = ADP-D-glycero-beta-D-manno-heptose + diphosphate. It participates in nucleotide-sugar biosynthesis; ADP-L-glycero-beta-D-manno-heptose biosynthesis; ADP-L-glycero-beta-D-manno-heptose from D-glycero-beta-D-manno-heptose 7-phosphate: step 1/4. Its pathway is nucleotide-sugar biosynthesis; ADP-L-glycero-beta-D-manno-heptose biosynthesis; ADP-L-glycero-beta-D-manno-heptose from D-glycero-beta-D-manno-heptose 7-phosphate: step 3/4. Functionally, catalyzes the phosphorylation of D-glycero-D-manno-heptose 7-phosphate at the C-1 position to selectively form D-glycero-beta-D-manno-heptose-1,7-bisphosphate. In terms of biological role, catalyzes the ADP transfer from ATP to D-glycero-beta-D-manno-heptose 1-phosphate, yielding ADP-D-glycero-beta-D-manno-heptose. In Shewanella sp. (strain W3-18-1), this protein is Bifunctional protein HldE.